The chain runs to 208 residues: FMN-dependent NADH:quinone oxidoreductase 2 (208 aa).

It belongs to the azoreductase type 1 family. As to quaternary structure, homodimer. It depends on FMN as a cofactor.

The enzyme catalyses 2 a quinone + NADH + H(+) = 2 a 1,4-benzosemiquinone + NAD(+). The catalysed reaction is N,N-dimethyl-1,4-phenylenediamine + anthranilate + 2 NAD(+) = 2-(4-dimethylaminophenyl)diazenylbenzoate + 2 NADH + 2 H(+). Quinone reductase that provides resistance to thiol-specific stress caused by electrophilic quinones. Functionally, also exhibits azoreductase activity. Catalyzes the reductive cleavage of the azo bond in aromatic azo compounds to the corresponding amines. The polypeptide is FMN-dependent NADH:quinone oxidoreductase 2 (Bacillus anthracis).